We begin with the raw amino-acid sequence, 403 residues long: Blue light- and temperature-regulated antirepressor BluF (403 aa).

Positions Leu-2–Glu-93 constitute a BLUF domain. The joining helix stretch occupies residues Arg-98 to Ile-144. The EAL domain occupies Asp-155–Lys-403.

Monomer, it undergoes transient dimerization following photoexcitation or upon temperature reduction, with a relaxation time of about 2 minutes. The dimer may be the inactive state. Interacts with the N- and C-terminal domains of BluR. Can also interact with the C-terminal domain of MlrA. FAD serves as cofactor.

In terms of biological role, binds to and releases the BluR repressor from its bound DNA target in a blue light-dependent (470 nm) fashion. A shift to low temperature also triggers a BluF-mediated relief of repression by BluR, suggesting BluF may serve as a thermometer. Blue light may act to increase the affinity of BluF for BluR, allowing it to be released from its operator. The protein has a reversible photocycle, and undergoes structural changes, probably in the EAL domain, in response to light. This Escherichia coli (strain K12) protein is Blue light- and temperature-regulated antirepressor BluF.